Reading from the N-terminus, the 202-residue chain is Endothelin-1 (202 aa).

Residues 1–25 form the signal peptide; that stretch reads MDYLPVLFSLLLVVFQGAPEAAVLG. Residues 26–50 constitute a propeptide that is removed on maturation; the sequence is AELSTGPDSGGEKPAPSAPWRPRRS. The disordered stretch occupies residues 28–48; the sequence is LSTGPDSGGEKPAPSAPWRPR. 2 disulfides stabilise this stretch: Cys53–Cys67 and Cys55–Cys63. Positions 74-202 are excised as a propeptide; the sequence is VNTPEHIVPY…EKKVTHNRTH (129 aa). The endothelin-like stretch occupies residues 110–124; that stretch reads CQCASQKDKKCWTFC.

This sequence belongs to the endothelin/sarafotoxin family.

It localises to the secreted. Functionally, endothelins are endothelium-derived vasoconstrictor peptides. Probable ligand for G-protein coupled receptors EDNRA and EDNRB which activates PTK2B, BCAR1, BCAR3 and, GTPases RAP1 and RHOA cascade in glomerular mesangial cells. Also binds the DEAR/FBXW7-AS1 receptor. Promotes mesenteric arterial wall remodeling via activation of ROCK signaling and subsequent colocalization of NFATC3 with F-actin filaments. NFATC3 then translocates to the nucleus where it subsequently promotes the transcription of the smooth muscle hypertrophy and differentiation marker ACTA2. This Felis catus (Cat) protein is Endothelin-1 (EDN1).